Reading from the N-terminus, the 378-residue chain is Apolipoprotein A-IV (378 aa).

The signal sequence occupies residues 1–20; sequence MFLKAVVLTLSLVAITGARA. 13 repeat units span residues 33 to 54, 60 to 81, 82 to 98, 110 to 130, 131 to 152, 153 to 174, 175 to 196, 197 to 218, 219 to 240, 241 to 262, 263 to 280, 281 to 302, and 303 to 324. The segment at 33–324 is 13 X 22 AA approximate tandem repeats; that stretch reads DYFSQLSNNA…QVEELRQKLG (292 aa). The disordered stretch occupies residues 354 to 378; the sequence is EKESQDTPVALPKQEQEQSAVPLES.

Belongs to the apolipoprotein A1/A4/E family. In terms of assembly, homodimer.

It localises to the secreted. Its function is as follows. May have a role in chylomicrons and VLDL secretion and catabolism. Required for efficient activation of lipoprotein lipase by ApoC-II; potent activator of LCAT. Apoa-IV is a major component of HDL and chylomicrons. In Canis lupus familiaris (Dog), this protein is Apolipoprotein A-IV.